A 280-amino-acid polypeptide reads, in one-letter code: Ribosomal RNA small subunit methyltransferase A (280 aa).

Residues histidine 15, leucine 17, glycine 42, glutamate 64, aspartate 89, and asparagine 109 each coordinate S-adenosyl-L-methionine.

Belongs to the class I-like SAM-binding methyltransferase superfamily. rRNA adenine N(6)-methyltransferase family. RsmA subfamily.

The protein resides in the cytoplasm. It carries out the reaction adenosine(1518)/adenosine(1519) in 16S rRNA + 4 S-adenosyl-L-methionine = N(6)-dimethyladenosine(1518)/N(6)-dimethyladenosine(1519) in 16S rRNA + 4 S-adenosyl-L-homocysteine + 4 H(+). Its function is as follows. Specifically dimethylates two adjacent adenosines (A1518 and A1519) in the loop of a conserved hairpin near the 3'-end of 16S rRNA in the 30S particle. May play a critical role in biogenesis of 30S subunits. The sequence is that of Ribosomal RNA small subunit methyltransferase A from Synechococcus sp. (strain WH7803).